An 896-amino-acid chain; its full sequence is Chromatin assembly factor 1 subunit A-A (896 aa).

3 disordered regions span residues 1–23 (MPGK…KKMV), 185–377 (TSTS…EEEK), and 552–610 (DSDE…DPEN). Over residues 10–21 (VMQSSTKSNTKK) the composition is skewed to polar residues. Low complexity predominate over residues 211-226 (ASVSSSSSPVSLSSPD). Residues 227 to 236 (AQTGSQFRNR) show a composition bias toward polar residues. Residues 237-246 (SSPSTSTTPT) are compositionally biased toward low complexity. Residues 255-284 (SADKNKTKDKDKQRQAEKEERERAKKEARS) are compositionally biased toward basic and acidic residues. The segment covering 285–302 (AKKKKRQGLLKNLQRKRG) has biased composition (basic residues). Positions 308–377 (SGKEYKKEKK…EEKRLKEEEK (70 aa)) are enriched in basic and acidic residues. Composition is skewed to acidic residues over residues 552 to 563 (DSDEEWEEEEPG), 572 to 586 (ENDD…DDDG), and 595 to 607 (SDDE…ECTD). Residues 642 to 678 (CVWWDSKASEISLLQKFSACILESPAVDEELAQEISS) form a necessary for homodimerization, competence for chromatin assembly region. A disordered region spans residues 724–743 (SDAAGNESTSPNVTPQTPSN). Positions 729–743 (NESTSPNVTPQTPSN) are enriched in polar residues.

Belongs to the CHAF1A family. In terms of assembly, homodimer.

Its subcellular location is the nucleus. Its function is as follows. Involved in chromatin assembly in DNA replication and DNA repair. This is Chromatin assembly factor 1 subunit A-A (chaf1a-a) from Xenopus laevis (African clawed frog).